The following is a 352-amino-acid chain: Photosystem II D2 protein (352 aa).

Position 2 is an N-acetylthreonine (T2). T2 is subject to Phosphothreonine. A helical membrane pass occupies residues 40 to 60 (TAYLALGGWLTGTTFVTSWYT). H117 contacts chlorophyll a. Residues 124–140 (GFMLRQFEIARSVKLRP) traverse the membrane as a helical segment. Positions 129 and 142 each coordinate pheophytin a. Residues 152–165 (VFVSVFLIYPLGQS) form a helical membrane-spanning segment. Residue H197 coordinates chlorophyll a. Residues 207 to 227 (AALLCAIHGATVENTLFEDGD) form a helical membrane-spanning segment. The a plastoquinone site is built by H214 and F261. H214 is a binding site for Fe cation. H268 lines the Fe cation pocket. The chain crosses the membrane as a helical span at residues 278–294 (GLWMSALGVVGLALNLR).

Belongs to the reaction center PufL/M/PsbA/D family. As to quaternary structure, PSII is composed of 1 copy each of membrane proteins PsbA, PsbB, PsbC, PsbD, PsbE, PsbF, PsbH, PsbI, PsbJ, PsbK, PsbL, PsbM, PsbT, PsbX, PsbY, PsbZ, Psb30/Ycf12, at least 3 peripheral proteins of the oxygen-evolving complex and a large number of cofactors. It forms dimeric complexes. The cofactor is The D1/D2 heterodimer binds P680, chlorophylls that are the primary electron donor of PSII, and subsequent electron acceptors. It shares a non-heme iron and each subunit binds pheophytin, quinone, additional chlorophylls, carotenoids and lipids. There is also a Cl(-1) ion associated with D1 and D2, which is required for oxygen evolution. The PSII complex binds additional chlorophylls, carotenoids and specific lipids..

The protein localises to the plastid. The protein resides in the chloroplast thylakoid membrane. It carries out the reaction 2 a plastoquinone + 4 hnu + 2 H2O = 2 a plastoquinol + O2. Functionally, photosystem II (PSII) is a light-driven water:plastoquinone oxidoreductase that uses light energy to abstract electrons from H(2)O, generating O(2) and a proton gradient subsequently used for ATP formation. It consists of a core antenna complex that captures photons, and an electron transfer chain that converts photonic excitation into a charge separation. The D1/D2 (PsbA/PsbD) reaction center heterodimer binds P680, the primary electron donor of PSII as well as several subsequent electron acceptors. D2 is needed for assembly of a stable PSII complex. This Pleurastrum terricola (Filamentous green alga) protein is Photosystem II D2 protein.